The primary structure comprises 302 residues: D-alanine--D-alanine ligase (302 aa).

The ATP-grasp domain maps to 100-294; the sequence is KALFRREGLL…FPELVEKLIQ (195 aa). 127–180 is an ATP binding site; it reads GLNYPIFVKSNIGGSSVNVHLVTNYEELFIAMEALFNAGEEVLLEEAIIGQEVT. Mg(2+) is bound by residues aspartate 248, glutamate 261, and asparagine 263.

It belongs to the D-alanine--D-alanine ligase family. The cofactor is Mg(2+). Mn(2+) is required as a cofactor.

The protein localises to the cytoplasm. The enzyme catalyses 2 D-alanine + ATP = D-alanyl-D-alanine + ADP + phosphate + H(+). It participates in cell wall biogenesis; peptidoglycan biosynthesis. Cell wall formation. The protein is D-alanine--D-alanine ligase of Lawsonia intracellularis (strain PHE/MN1-00).